The following is a 769-amino-acid chain: P-selectin (769 aa).

The first 32 residues, 1–32 (MASCPKAIWSWRFQRVVFRSVQLLCFSILIFE), serve as a signal peptide directing secretion. At 33–717 (LMTQKEVSAW…QEALTYIGGA (685 aa)) the chain is on the extracellular side. N-linked (GlcNAc...) asparagine glycans are attached at residues asparagine 54 and asparagine 80. The region spanning 58 to 158 (AFCQKYYTDL…PCGKRKRALC (101 aa)) is the C-type lectin domain. Intrachain disulfides connect cysteine 60–cysteine 158, cysteine 131–cysteine 150, cysteine 163–cysteine 174, cysteine 168–cysteine 183, cysteine 185–cysteine 194, cysteine 200–cysteine 244, cysteine 230–cysteine 257, cysteine 262–cysteine 306, cysteine 292–cysteine 319, cysteine 324–cysteine 368, cysteine 354–cysteine 381, cysteine 386–cysteine 430, cysteine 416–cysteine 443, cysteine 448–cysteine 492, cysteine 478–cysteine 505, cysteine 510–cysteine 554, cysteine 540–cysteine 567, cysteine 581–cysteine 625, cysteine 611–cysteine 638, cysteine 643–cysteine 687, and cysteine 673–cysteine 700. Ca(2+)-binding residues include glutamate 121, asparagine 123, and asparagine 124. An a carbohydrate-binding site is contributed by asparagine 123. 2 residues coordinate a carbohydrate: glutamate 133 and asparagine 146. 2 residues coordinate Ca(2+): asparagine 146 and aspartate 147. The 37-residue stretch at 159-195 (YRASCQDMSCSKQGECIETIGNYTCSCYPGFYGPECE) folds into the EGF-like domain. Asparagine 180 is a glycosylation site (N-linked (GlcNAc...) asparagine). Sushi domains are found at residues 198-259 (RECG…QCVA), 260-321 (VQCP…VCKA), 322-383 (IACE…VCQA), 384-445 (LQCQ…ECQA), 446-507 (VTCA…TCEA), 508-569 (SKCP…SCKV), 579-640 (LRCP…TCRA), and 641-702 (VKCS…TCQA). Residues asparagine 212 and asparagine 219 are each glycosylated (N-linked (GlcNAc...) asparagine). Asparagine 347 carries an N-linked (GlcNAc...) asparagine glycan. Residue asparagine 398 is glycosylated (N-linked (GlcNAc...) asparagine). Residue asparagine 604 is glycosylated (N-linked (GlcNAc...) asparagine). 3 N-linked (GlcNAc...) asparagine glycosylation sites follow: asparagine 655, asparagine 662, and asparagine 680. Residues 718 to 734 (AAGTTGLVTSSILLALL) traverse the membrane as a helical segment. Over 735–769 (RRRRRQKDDGKSPLNPQSHLGTYGVFTNAAFDPSP) the chain is Cytoplasmic. The tract at residues 740-769 (QKDDGKSPLNPQSHLGTYGVFTNAAFDPSP) is disordered. The Endocytosis signal motif lies at 757–760 (YGVF). The tract at residues 760-769 (FTNAAFDPSP) is interaction with SNX17.

Belongs to the selectin/LECAM family. Interacts with SNX17. Interacts with SELPLG/PSGL1 and PODXL2 and mediates neutrophil adhesion and leukocyte rolling. This interaction requires the sialyl-Lewis X epitope of SELPLG and PODXL2, and specific tyrosine sulfation on SELPLG. Interacts (via C-type lectin domain) with alpha-IIb/beta3 integrin ITGA2B:ITGB3 and alpha-V/beta-3 integrin ITGAV:ITGB3. Interacts with alpha5/beta1 integrin ITGA5:ITGB1 and alpha4/beta1 integrin ITGA4:ITGB.

It is found in the cell membrane. In terms of biological role, ca(2+)-dependent receptor for myeloid cells that binds to carbohydrates on neutrophils and monocytes. Mediates the interaction of activated endothelial cells or platelets with leukocytes. The ligand recognized is sialyl-Lewis X. Mediates rapid rolling of leukocyte rolling over vascular surfaces during the initial steps in inflammation through interaction with SELPLG. Mediates cell-cell interactions and cell adhesion via the interaction with integrin alpha-IIb/beta3 (ITGA2B:ITGB3) and integrin alpha-V/beta-3 (ITGAV:ITGB3). The polypeptide is P-selectin (SELP) (Ovis aries (Sheep)).